The following is a 293-amino-acid chain: Magnetosome protein MamB (293 aa).

The Cytoplasmic segment spans residues 1–12 (MTTAACRKCRDE). Residues 1-214 (MTTAACRKCR…GLMDTSVEND (214 aa)) are transmembrane domain (TMD). Residues 13 to 33 (VIWWAFFINIGQTTYKGVLGV) traverse the membrane as a helical segment. At 34–78 (LSGSAALVADAMHSGADVVATLVTMFSVKVSDKKADEKYPFGYGN) the chain is on the lumenal side. A helical membrane pass occupies residues 79-99 (IQFIASSIVGLILFFGALYLM). Residues 100 to 105 (YESTMQ) lie on the Cytoplasmic side of the membrane. The chain crosses the membrane as a helical span at residues 106 to 126 (IIAGNTSSPSPFAVLGAIVSI). Residues 127 to 158 (ATNELMFRYQSCVGRQNNSPAIIANAWDNRSD) lie on the Lumenal side of the membrane. A helical membrane pass occupies residues 159-179 (ALSSVAVLIGIVAAVVGFPIA). Topologically, residues 180-293 (DRLAAIGVGI…VGVTPVRIAA (114 aa)) are cytoplasmic. Positions 215 to 293 (VLVDAYNIAK…VGVTPVRIAA (79 aa)) are C-terminal domain (CTD). Zn(2+) is bound by residues H245, D247, and H283.

The protein belongs to the cation diffusion facilitator (CDF) transporter (TC 2.A.4) family. In terms of assembly, the isolated C-terminal domain (approximately 213-293) forms homodimers. Forms heterodimers with MamM.

The protein resides in the magnetosome membrane. Its function is as follows. Plays a dual, essential role in magnetosome formation; required for magnetosome vesicle formation as well as biomineralization. Probably binds and transports iron. Requires heterodimerization with MamM for stability. The polypeptide is Magnetosome protein MamB (mamB) (Magnetospira sp. (strain QH-2) (Marine magnetic spirillum (strain QH-2))).